The primary structure comprises 177 residues: Large ribosomal subunit protein uL6 (177 aa).

This sequence belongs to the universal ribosomal protein uL6 family. As to quaternary structure, part of the 50S ribosomal subunit.

In terms of biological role, this protein binds to the 23S rRNA, and is important in its secondary structure. It is located near the subunit interface in the base of the L7/L12 stalk, and near the tRNA binding site of the peptidyltransferase center. The polypeptide is Large ribosomal subunit protein uL6 (Bradyrhizobium diazoefficiens (strain JCM 10833 / BCRC 13528 / IAM 13628 / NBRC 14792 / USDA 110)).